A 285-amino-acid polypeptide reads, in one-letter code: MNRLPDDYDPYAVEEPSDEEPALSSSEDEVDVLLHGTPDQKRKLIRECLTGESESSSEDEFEKEMEAELNSTMKTMEDKLSSLGTGSSSGNGKVATAPTRYYDDIYFDSDSEDEDRAVQVTKKKKKKQHKIPTNDELLYDPEKDNRDQAWVDAQRRGYHGLGPQRSRQQQPVPNSDAVLNCPACMTTLCLDCQRHESYKTQYRAMFVMNCSINKEEVLRYKASENRKKRRVHKKMRSNREDAAEKAETDVEEIYHPVMCTECSTEVAVYDKDEVFHFFNVLASHS.

Position 1 is an N-acetylmethionine (Met-1). The tract at residues 1 to 30 is disordered; sequence MNRLPDDYDPYAVEEPSDEEPALSSSEDEV. Residues 15-30 show a composition bias toward acidic residues; the sequence is EPSDEEPALSSSEDEV. Ser-17 bears the Phosphoserine mark. Thr-37 bears the Phosphothreonine mark. The disordered stretch occupies residues 48–96; that stretch reads CLTGESESSSEDEFEKEMEAELNSTMKTMEDKLSSLGTGSSSGNGKVAT. Over residues 55–67 the composition is skewed to acidic residues; sequence SSSEDEFEKEMEA. Low complexity predominate over residues 81–92; the sequence is SSLGTGSSSGNG. Phosphoserine is present on residues Ser-109 and Ser-111. The segment at 118–144 is disordered; that stretch reads VQVTKKKKKKQHKIPTNDELLYDPEKD. Residues 121-130 show a composition bias toward basic residues; that stretch reads TKKKKKKQHK.

In terms of assembly, interacts with E2F1. The C-terminal half binds the N-terminal of E2F1. Also interacts with E2F2 and E2F3, but not E2F4. In terms of tissue distribution, ubiquitously expressed. Highest levels in heart, placenta, skeletal muscle and pancreas. Lower levels in brain, lung and kidney. In the brain, expressed in all regions with high levels in the cerebellum and cerebral cortex. Expressed in COS1 and transformed skin fibroblasts.

Its subcellular location is the cytoplasm. It is found in the nucleus. Its function is as follows. May play an important role in the fine-tuning of both major E2F1 activities, the regulation of the cell-cycle and the induction of apoptosis. Promotes S-phase entry, and inhibits p14(ARP) expression. This is E2F-associated phosphoprotein (EAPP) from Homo sapiens (Human).